The following is a 124-amino-acid chain: Protein MT1307 (124 aa).

A signal peptide (tat-type signal) is located at residues methionine 1–alanine 35.

The protein to M.tuberculosis Rv1813c. Predicted to be exported by the Tat system. The position of the signal peptide cleavage has not been experimentally proven.

The chain is Protein MT1307 from Mycobacterium tuberculosis (strain CDC 1551 / Oshkosh).